The primary structure comprises 394 residues: SVGFKAGVKDYRLTYYTPDYETLATDILAAFRVTPQPGVPPEEAGAAVAAESSTGTWTTVWTDGLTSLDRYKGRCYHIEPVAGEENQYIAYVAYPLDLFEEGSVTNMFTSIVGNVFGFKALRALRLEDLRIPPAYSKTFQGPPHGIQVERDKLNKYGRPLLGCTIKPKLGLSAKNYGRAVYECLRGGLDFTKDDENVNSQPFMRWRDRFLFCTEAIYKAQAETGEIKGHYLNATAGTSEEMIKRAVCARELGVPIVMHDYLTGGFTANTSLAHYCRDNGLLLHIHRAMHAVIDRQRNHGIHFRVLAKALRMSGGDHIHSGTVVGKLEGERDVTLGFVDLLRDDFIEKDRSRGIYFTQDWVSMPGVLPVASGGIHVWHMPALTEIFGDDSVLQFG.

Residue Lys-5 is modified to N6,N6,N6-trimethyllysine. Asn-114 and Thr-164 together coordinate substrate. Lys-166 serves as the catalytic Proton acceptor. Lys-168 provides a ligand contact to substrate. 3 residues coordinate Mg(2+): Lys-192, Asp-194, and Glu-195. Lys-192 carries the N6-carboxylysine modification. His-285 serves as the catalytic Proton acceptor. Substrate is bound by residues Arg-286, His-318, and Ser-370.

This sequence belongs to the RuBisCO large chain family. Type I subfamily. As to quaternary structure, heterohexadecamer of 8 large chains and 8 small chains. Requires Mg(2+) as cofactor.

It is found in the plastid. The protein localises to the chloroplast. The catalysed reaction is 2 (2R)-3-phosphoglycerate + 2 H(+) = D-ribulose 1,5-bisphosphate + CO2 + H2O. The enzyme catalyses D-ribulose 1,5-bisphosphate + O2 = 2-phosphoglycolate + (2R)-3-phosphoglycerate + 2 H(+). Functionally, ruBisCO catalyzes two reactions: the carboxylation of D-ribulose 1,5-bisphosphate, the primary event in carbon dioxide fixation, as well as the oxidative fragmentation of the pentose substrate in the photorespiration process. Both reactions occur simultaneously and in competition at the same active site. This is Ribulose bisphosphate carboxylase large chain (rbcL) from Victoria cruziana (Santa Cruz water lily).